The following is a 231-amino-acid chain: Probable septum site-determining protein MinC (231 aa).

This sequence belongs to the MinC family. Interacts with MinD and FtsZ.

Its function is as follows. Cell division inhibitor that blocks the formation of polar Z ring septums. Rapidly oscillates between the poles of the cell to destabilize FtsZ filaments that have formed before they mature into polar Z rings. Prevents FtsZ polymerization. The protein is Probable septum site-determining protein MinC of Baumannia cicadellinicola subsp. Homalodisca coagulata.